The following is a 546-amino-acid chain: Phosphoglucomutase (546 aa).

Serine 135 functions as the Phosphoserine intermediate in the catalytic mechanism. 4 residues coordinate Mg(2+): serine 135, aspartate 288, aspartate 290, and aspartate 292.

This sequence belongs to the phosphohexose mutase family. It depends on Mg(2+) as a cofactor.

The enzyme catalyses alpha-D-glucose 1-phosphate = alpha-D-glucose 6-phosphate. The protein operates within glycolipid metabolism; diglucosyl-diacylglycerol biosynthesis. Its function is as follows. Catalyzes the interconversion between glucose-6-phosphate and alpha-glucose-1-phosphate. This is the first step in the biosynthesis of diglucosyl-diacylglycerol (Glc2-DAG), i.e. a glycolipid found in the membrane, which is also used as a membrane anchor for lipoteichoic acid (LTA). This chain is Phosphoglucomutase (pgcA), found in Staphylococcus epidermidis (strain ATCC 12228 / FDA PCI 1200).